The primary structure comprises 281 residues: Very-long-chain (3R)-3-hydroxyacyl-CoA dehydratase 1 (281 aa).

At 1–68 (MGKGDWRQGR…RRLGLLATAW (68 aa)) the chain is on the cytoplasmic side. Residues 69–88 (LTFYNIAMTAGWLVLAIAMV) form a helical membrane-spanning segment. The Lumenal segment spans residues 89–107 (RFYMEKGTHRGLYKSIQKT). The helical transmembrane segment at 108 to 124 (LKFFQTFALLEVVHCLI) threads the bilayer. Topologically, residues 125 to 134 (GIVPTSVLVT) are cytoplasmic. A helical transmembrane segment spans residues 135–152 (GVQVSSRIFMVWLITHSI). Over 153-158 (KPIQNE) the chain is Lumenal. The helical transmembrane segment at 159–173 (ESVVLFLVSWTVTEI) threads the bilayer. Topologically, residues 174–196 (TRYSFYTFSLLDHLPHFIKWARY) are cytoplasmic. A helical transmembrane segment spans residues 197 to 214 (NLFIILYPVGVAGELLTI). Residues Tyr-203 and Glu-210 contribute to the active site. Topologically, residues 215–244 (YAALPYVKKSGMFSVRLPNKYNVSFDYYYF) are lumenal. Asn-236 carries an N-linked (GlcNAc...) asparagine glycan. Residues 245 to 262 (LLITMASYIPLFPQLYFH) form a helical membrane-spanning segment. The Cytoplasmic portion of the chain corresponds to 263–281 (MLRQRRKVLHGEVIAEKDD).

It belongs to the very long-chain fatty acids dehydratase HACD family. May interact with enzymes of the ELO family (including ELOVL1); with those enzymes that mediate condensation, the first of the four steps of the reaction cycle responsible for fatty acids elongation, may be part of a larger fatty acids elongase complex. Interacts with TECR. In terms of processing, N-glycosylated. Expressed at high levels in heart, skeletal muscle and testis, weak expression in kidney and liver.

The protein resides in the endoplasmic reticulum membrane. The catalysed reaction is a very-long-chain (3R)-3-hydroxyacyl-CoA = a very-long-chain (2E)-enoyl-CoA + H2O. It carries out the reaction (3R)-hydroxyhexadecanoyl-CoA = (2E)-hexadecenoyl-CoA + H2O. It catalyses the reaction (3R)-hydroxyoctadecanoyl-CoA = (2E)-octadecenoyl-CoA + H2O. The enzyme catalyses (3R)-hydroxyeicosanoyl-CoA = (2E)-eicosenoyl-CoA + H2O. The catalysed reaction is (3R)-hydroxydocosanoyl-CoA = (2E)-docosenoyl-CoA + H2O. It carries out the reaction (3R)-hydroxytetracosanoyl-CoA = (2E)-tetracosenoyl-CoA + H2O. It catalyses the reaction (3R)-hydroxyhexacosanoyl-CoA = (2E)-hexacosenoyl-CoA + H2O. Its pathway is lipid metabolism; fatty acid biosynthesis. This is Very-long-chain (3R)-3-hydroxyacyl-CoA dehydratase 1 from Mus musculus (Mouse).